The primary structure comprises 214 residues: 3-isopropylmalate dehydratase small subunit (214 aa).

It belongs to the LeuD family. LeuD type 1 subfamily. As to quaternary structure, heterodimer of LeuC and LeuD.

The enzyme catalyses (2R,3S)-3-isopropylmalate = (2S)-2-isopropylmalate. It participates in amino-acid biosynthesis; L-leucine biosynthesis; L-leucine from 3-methyl-2-oxobutanoate: step 2/4. Its function is as follows. Catalyzes the isomerization between 2-isopropylmalate and 3-isopropylmalate, via the formation of 2-isopropylmaleate. This chain is 3-isopropylmalate dehydratase small subunit, found in Pseudomonas putida (strain W619).